A 128-amino-acid polypeptide reads, in one-letter code: NADH dehydrogenase [ubiquinone] 1 beta subcomplex subunit 6 (128 aa).

Ser-2 bears the N-acetylserine mark. Lys-24 is modified (N6-acetyllysine). Residues 64–86 (TYRHSIFAFTHVLIPVWIIHYYL) traverse the membrane as a helical segment.

Belongs to the complex I NDUFB6 subunit family. In terms of assembly, complex I is composed of 45 different subunits.

The protein localises to the mitochondrion inner membrane. Functionally, accessory subunit of the mitochondrial membrane respiratory chain NADH dehydrogenase (Complex I), that is believed not to be involved in catalysis. Complex I functions in the transfer of electrons from NADH to the respiratory chain. The immediate electron acceptor for the enzyme is believed to be ubiquinone. The protein is NADH dehydrogenase [ubiquinone] 1 beta subcomplex subunit 6 (NDUFB6) of Bos taurus (Bovine).